The primary structure comprises 777 residues: Acyl-CoA dehydrogenase family member 11 (777 aa).

FAD-binding positions include 501-511, 509-511, 535-537, and Ser537; these read FCMTEPDVASS, ASS, and WSS. Ser511 serves as a coordination point for substrate. Residue 626–629 coordinates substrate; that stretch reads GPGR. Residues Arg654, Gln724, and 724–728 contribute to the FAD site; that span reads QVCGG. Gly752 is a binding site for substrate. FAD-binding positions include 753-755 and Glu755; that span reads PDE.

This sequence belongs to the acyl-CoA dehydrogenase family. In terms of assembly, homodimer. FAD serves as cofactor.

It localises to the peroxisome. It is found in the mitochondrion membrane. The enzyme catalyses a 2,3-saturated acyl-CoA + oxidized [electron-transfer flavoprotein] + H(+) = a (2E)-enoyl-CoA + reduced [electron-transfer flavoprotein]. The catalysed reaction is docosanoyl-CoA + oxidized [electron-transfer flavoprotein] + H(+) = (2E)-docosenoyl-CoA + reduced [electron-transfer flavoprotein]. It catalyses the reaction tetracosanoyl-CoA + oxidized [electron-transfer flavoprotein] + H(+) = (2E)-tetracosenoyl-CoA + reduced [electron-transfer flavoprotein]. It carries out the reaction eicosanoyl-CoA + oxidized [electron-transfer flavoprotein] + H(+) = (2E)-eicosenoyl-CoA + reduced [electron-transfer flavoprotein]. The enzyme catalyses hexacosanoyl-CoA + oxidized [electron-transfer flavoprotein] + H(+) = (2E)-hexacosenoyl-CoA + reduced [electron-transfer flavoprotein]. The catalysed reaction is tricosanoyl-CoA + oxidized [electron-transfer flavoprotein] + H(+) = (2E)-tricosenoyl-CoA + reduced [electron-transfer flavoprotein]. Its pathway is lipid metabolism; fatty acid beta-oxidation. In terms of biological role, acyl-CoA dehydrogenase, that exhibits maximal activity towards saturated C22-CoA. Probably participates in beta-oxydation and energy production but could also play a role in the metabolism of specific fatty acids to control fatty acids composition of cellular lipids in brain. The protein is Acyl-CoA dehydrogenase family member 11 (ACAD11) of Gallus gallus (Chicken).